The following is a 287-amino-acid chain: Ribosomal RNA small subunit methyltransferase A (287 aa).

S-adenosyl-L-methionine contacts are provided by Asn-28, Leu-30, Gly-55, Glu-76, Asp-101, and Asn-125.

This sequence belongs to the class I-like SAM-binding methyltransferase superfamily. rRNA adenine N(6)-methyltransferase family. RsmA subfamily.

It is found in the cytoplasm. The catalysed reaction is adenosine(1518)/adenosine(1519) in 16S rRNA + 4 S-adenosyl-L-methionine = N(6)-dimethyladenosine(1518)/N(6)-dimethyladenosine(1519) in 16S rRNA + 4 S-adenosyl-L-homocysteine + 4 H(+). Functionally, specifically dimethylates two adjacent adenosines (A1518 and A1519) in the loop of a conserved hairpin near the 3'-end of 16S rRNA in the 30S particle. May play a critical role in biogenesis of 30S subunits. The chain is Ribosomal RNA small subunit methyltransferase A from Alkaliphilus metalliredigens (strain QYMF).